The chain runs to 145 residues: Protein FimA (145 aa).

Belongs to the fimbrial protein family.

It is found in the fimbrium. The polypeptide is Protein FimA (fimA) (Bordetella pertussis).